The following is a 21-amino-acid chain: Hemolymph 65 kDa lectin BG04 (21 aa).

Hemolymph.

Its subcellular location is the secreted. Its function is as follows. Binds and precipitates antigens of the parasite Echinostoma paraensei. The protein is Hemolymph 65 kDa lectin BG04 (BG04) of Biomphalaria glabrata (Bloodfluke planorb).